The chain runs to 558 residues: MPWWLISLTFIYRLFLCATIRTVEAPDEWWQSTEVAYNMVFGKGHLPWEWRYGLRSVLFPAVVALPFYLLKLLGRDTTWAVWFAPRVLQALVLTLIDVSVFCMGATLDELLAKRELELAEETRQSKTKGFSYFCEVSVSRSRRGICNSISYTALLLSLSNWYMAYCGVRLYGNVIEALLVLLTLQQRRYVPFLLLTGLASAIRVTSAVVLSPLVFRHLANATREHGFIRGLFRIVLTGLIVLVAVLGGVMVLDYCFYGRWVLTPLAFFRFNVLHNLSRFFGEHPWYFYVGPVLVGIVGPHVLFTIAAPLVLWRDTASRAVSRPVLGMLGIGAWTLGFYSLIDHKEMRFVFVVIPLSLITAAFVLVRWSRTSAVVVKMNRLFVLFNIVMIYLMGYVYRRGPLDVMAEVRDGPRINRLDVIATCYTVPGYSYMHKKVNHLGFVDCSIDLDEKTGLPKVTEDIMFRRYPKEYVLWRYDGKHSFNMSDLEESRKASELQSVVMPKSAPHPDAMVMTRAVAKEIEEPFLKRHGYRLYRTFLHSPLTLAPYEDIYIQMWVKVTK.

The next 4 membrane-spanning stretches (helical) occupy residues 53–73 (GLRSVLFPAVVALPFYLLKLL), 81–101 (VWFAPRVLQALVLTLIDVSVF), 164–184 (AYCGVRLYGNVIEALLVLLTL), and 190–210 (VPFLLLTGLASAIRVTSAVVL). N220 is a glycosylation site (N-linked (GlcNAc...) asparagine). A helical membrane pass occupies residues 234–254 (IVLTGLIVLVAVLGGVMVLDY). N-linked (GlcNAc...) asparagine glycosylation occurs at N275. Transmembrane regions (helical) follow at residues 292 to 312 (VLVGIVGPHVLFTIAAPLVLW), 323 to 343 (PVLGMLGIGAWTLGFYSLIDH), 348 to 368 (FVFVVIPLSLITAAFVLVRWS), and 372 to 392 (AVVVKMNRLFVLFNIVMIYLM).

It belongs to the glycosyltransferase 22 family. PIGB subfamily.

It is found in the endoplasmic reticulum membrane. The protein operates within glycolipid biosynthesis; glycosylphosphatidylinositol-anchor biosynthesis. Its function is as follows. Mannosyltransferase involved in glycosylphosphatidylinositol-anchor biosynthesis. Transfers the third alpha-1,2-mannose to Man2-GlcN-acyl-PI during GPI precursor assembly. This is GPI mannosyltransferase 3 (GPI10) from Trypanosoma brucei brucei.